A 335-amino-acid polypeptide reads, in one-letter code: Fructose-1,6-bisphosphatase class 1 (335 aa).

Mg(2+) is bound by residues Glu92, Asp114, Leu116, and Asp117. Substrate contacts are provided by residues 117–120, Asn209, and Lys275; that span reads DGSS. Glu281 provides a ligand contact to Mg(2+).

It belongs to the FBPase class 1 family. Homotetramer. Mg(2+) is required as a cofactor.

It localises to the cytoplasm. The catalysed reaction is beta-D-fructose 1,6-bisphosphate + H2O = beta-D-fructose 6-phosphate + phosphate. Its pathway is carbohydrate biosynthesis; gluconeogenesis. The sequence is that of Fructose-1,6-bisphosphatase class 1 from Verminephrobacter eiseniae (strain EF01-2).